The following is a 396-amino-acid chain: Elongation factor Tu (396 aa).

In terms of domain architecture, tr-type G spans 10–206; sequence KPHCNIGTIG…AVDAYIPQPE (197 aa). A G1 region spans residues 19–26; it reads GHVDHGKT. Residue 19–26 participates in GTP binding; sequence GHVDHGKT. Mg(2+) is bound at residue T26. Positions 60-64 are G2; sequence GITIS. The interval 81 to 84 is G3; it reads DCPG. Residues 81–85 and 136–139 each bind GTP; these read DCPGH and NKVD. The tract at residues 136-139 is G4; sequence NKVD. Positions 174 to 176 are G5; that stretch reads SAL.

Belongs to the TRAFAC class translation factor GTPase superfamily. Classic translation factor GTPase family. EF-Tu/EF-1A subfamily. Monomer.

It is found in the cytoplasm. The enzyme catalyses GTP + H2O = GDP + phosphate + H(+). In terms of biological role, GTP hydrolase that promotes the GTP-dependent binding of aminoacyl-tRNA to the A-site of ribosomes during protein biosynthesis. This is Elongation factor Tu from Granulibacter bethesdensis (strain ATCC BAA-1260 / CGDNIH1).